The sequence spans 494 residues: Glutamate--tRNA ligase (494 aa).

A 'HIGH' region motif is present at residues 9–19 (PSPTGDPHVGT). The short motif at 250 to 254 (KLSKR) is the 'KMSKS' region element. Lys-253 is a binding site for ATP.

The protein belongs to the class-I aminoacyl-tRNA synthetase family. Glutamate--tRNA ligase type 1 subfamily. Monomer.

It localises to the cytoplasm. It catalyses the reaction tRNA(Glu) + L-glutamate + ATP = L-glutamyl-tRNA(Glu) + AMP + diphosphate. Functionally, catalyzes the attachment of glutamate to tRNA(Glu) in a two-step reaction: glutamate is first activated by ATP to form Glu-AMP and then transferred to the acceptor end of tRNA(Glu). This is Glutamate--tRNA ligase from Alcanivorax borkumensis (strain ATCC 700651 / DSM 11573 / NCIMB 13689 / SK2).